A 334-amino-acid chain; its full sequence is UL-16 binding protein 5 (334 aa).

An N-terminal signal peptide occupies residues 1–25; it reads MAAAASPAFLLRLPLLLLLSSWCRT. The Extracellular portion of the chain corresponds to 26–223; it reads GLADPHSLCY…TMSSGTAQPR (198 aa). The MHC class I alpha-1 like stretch occupies residues 29–117; the sequence is DPHSLCYDIT…IQLENYIPKE (89 aa). An intrachain disulfide couples C50 to C66. N82 carries N-linked (GlcNAc...) asparagine glycosylation. An MHC class I alpha-2 like region spans residues 118-210; the sequence is PLTLQARMSC…MDSTLEPSAG (93 aa). The cysteines at positions 127 and 190 are disulfide-linked. G218 is lipidated: GPI-anchor amidated glycine. The propeptide at 219–334 is removed in mature form; that stretch reads TAQPRATATT…YSEPLQVSIS (116 aa). The chain crosses the membrane as a helical span at residues 224–243; it reads ATATTLILCCLLIMCLLICS. At 244–334 the chain is on the cytoplasmic side; the sequence is RHSLTQSHGH…YSEPLQVSIS (91 aa).

This sequence belongs to the MHC class I family. Interacts with KLRK1/NKG2D. As to quaternary structure, (Microbial infection) In CMV-infected cells, interacts with the viral glycoprotein UL16; this interaction causes RAET1G retention in the endoplasmic reticulum and cis-Golgi and prevents binding to and activation of KLRK1/NKG2D, providing CMV with an immune evasion mechanism. The functional form is cleaved C-terminally of the GPI-anchor and yields a 28 kDa protein. In terms of tissue distribution, isoform 1 is highly expressed in colon and in a number of tumor cell lines and highly restricted in normal tissues. Both isoforms are frequently expressed in cell lines derived from epithelial cancers, and in primary breast cancers.

It is found in the cell membrane. The protein resides in the endoplasmic reticulum. Its subcellular location is the secreted. In terms of biological role, binds and activates the KLRK1/NKG2D receptor, mediating natural killer cell cytotoxicity. Functionally, down-regulates the expression of KLRK1 and stimulates natural killer cells to secrete IFNG. Stimulates natural killer cells to secrete IFNG. In Homo sapiens (Human), this protein is UL-16 binding protein 5.